The following is a 465-amino-acid chain: GTPase Der (465 aa).

2 consecutive EngA-type G domains span residues 3 to 166 and 184 to 358; these read FLVA…LNEF and IHFS…ACAN. GTP-binding positions include 9–16, 56–60, 118–121, 190–197, 237–241, and 302–305; these read GRANVGKS, DTGGI, NKVD, GRPNVGKS, DTAGV, and NKWD. In terms of domain architecture, KH-like spans 359-443; that stretch reads KKITTADATR…PIVFEFKQSE (85 aa).

It belongs to the TRAFAC class TrmE-Era-EngA-EngB-Septin-like GTPase superfamily. EngA (Der) GTPase family. Associates with the 50S ribosomal subunit.

Its function is as follows. GTPase that plays an essential role in the late steps of ribosome biogenesis. The polypeptide is GTPase Der (Francisella philomiragia subsp. philomiragia (strain ATCC 25017 / CCUG 19701 / FSC 153 / O#319-036)).